The sequence spans 158 residues: Putative pre-16S rRNA nuclease (158 aa).

The tract at residues 138–158 (ELKPAQQTASRSGAGAGDGGS) is disordered.

It belongs to the YqgF nuclease family.

The protein localises to the cytoplasm. In terms of biological role, could be a nuclease involved in processing of the 5'-end of pre-16S rRNA. This Synechococcus sp. (strain CC9605) protein is Putative pre-16S rRNA nuclease.